Reading from the N-terminus, the 301-residue chain is Inosose dehydratase (301 aa).

This sequence belongs to the IolE/MocC family. The cofactor is glutathione. Requires Co(2+) as cofactor. It depends on Mn(2+) as a cofactor.

It catalyses the reaction scyllo-inosose = 3D-3,5/4-trihydroxycyclohexane-1,2-dione + H2O. It participates in polyol metabolism; myo-inositol degradation into acetyl-CoA; acetyl-CoA from myo-inositol: step 2/7. Its function is as follows. Catalyzes the dehydration of inosose (2-keto-myo-inositol, 2KMI or 2,4,6/3,5-pentahydroxycyclohexanone) to 3D-(3,5/4)-trihydroxycyclohexane-1,2-dione (D-2,3-diketo-4-deoxy-epi-inositol). The sequence is that of Inosose dehydratase from Lacticaseibacillus casei (strain BL23) (Lactobacillus casei).